The sequence spans 219 residues: Thiamine-phosphate synthase (219 aa).

4-amino-2-methyl-5-(diphosphooxymethyl)pyrimidine is bound by residues 45 to 49 (QYREK) and N77. Mg(2+)-binding residues include D78 and D97. Residue T116 participates in 4-amino-2-methyl-5-(diphosphooxymethyl)pyrimidine binding. Residue 142 to 144 (SFT) participates in 2-[(2R,5Z)-2-carboxy-4-methylthiazol-5(2H)-ylidene]ethyl phosphate binding. K145 lines the 4-amino-2-methyl-5-(diphosphooxymethyl)pyrimidine pocket. 2-[(2R,5Z)-2-carboxy-4-methylthiazol-5(2H)-ylidene]ethyl phosphate is bound by residues G173 and 193-194 (VT).

This sequence belongs to the thiamine-phosphate synthase family. Mg(2+) serves as cofactor.

It carries out the reaction 2-[(2R,5Z)-2-carboxy-4-methylthiazol-5(2H)-ylidene]ethyl phosphate + 4-amino-2-methyl-5-(diphosphooxymethyl)pyrimidine + 2 H(+) = thiamine phosphate + CO2 + diphosphate. The enzyme catalyses 2-(2-carboxy-4-methylthiazol-5-yl)ethyl phosphate + 4-amino-2-methyl-5-(diphosphooxymethyl)pyrimidine + 2 H(+) = thiamine phosphate + CO2 + diphosphate. The catalysed reaction is 4-methyl-5-(2-phosphooxyethyl)-thiazole + 4-amino-2-methyl-5-(diphosphooxymethyl)pyrimidine + H(+) = thiamine phosphate + diphosphate. It functions in the pathway cofactor biosynthesis; thiamine diphosphate biosynthesis; thiamine phosphate from 4-amino-2-methyl-5-diphosphomethylpyrimidine and 4-methyl-5-(2-phosphoethyl)-thiazole: step 1/1. In terms of biological role, condenses 4-methyl-5-(beta-hydroxyethyl)thiazole monophosphate (THZ-P) and 2-methyl-4-amino-5-hydroxymethyl pyrimidine pyrophosphate (HMP-PP) to form thiamine monophosphate (TMP). The polypeptide is Thiamine-phosphate synthase (Caldicellulosiruptor bescii (strain ATCC BAA-1888 / DSM 6725 / KCTC 15123 / Z-1320) (Anaerocellum thermophilum)).